Here is a 233-residue protein sequence, read N- to C-terminus: Putative quercetin 2,3-dioxygenase PM1685 (233 aa).

A divalent metal cation-binding residues include histidine 59, histidine 61, histidine 103, and glutamate 105.

This sequence belongs to the pirin family. A divalent metal cation is required as a cofactor.

The catalysed reaction is quercetin + O2 = 2-(3,4-dihydroxybenzoyloxy)-4,6-dihydroxybenzoate + CO. Its pathway is flavonoid metabolism; quercetin degradation. Putative quercetin 2,3-dioxygenase. This chain is Putative quercetin 2,3-dioxygenase PM1685, found in Pasteurella multocida (strain Pm70).